The following is a 698-amino-acid chain: G1/S-specific cyclin CCN1 (698 aa).

Positions 1–11 are enriched in low complexity; it reads MTSLQQQQQQQ. 5 disordered regions span residues 1 to 21, 277 to 326, 469 to 577, 599 to 619, and 659 to 698; these read MTSL…PHHI, QKKQ…DDED, DEDE…GSIL, SNSS…EKRY, and NNTN…QYHQ. Residues 277–302 are compositionally biased toward polar residues; the sequence is QKKQKKAFSSNSSRTTTASYTHQNQS. Acidic residues-rich tracts occupy residues 310 to 326 and 469 to 480; these read DEDI…DDED and DEDENVSTDDEA. Polar residues-rich tracts occupy residues 493–520 and 528–567; these read DGNN…NHPQ and PSAT…SSFA. A compositionally biased stretch (polar residues) spans 659–669; the sequence is NNTNSSSPLMN. Low complexity predominate over residues 670-690; sequence QQQQYYHQQQHQQQVTQSSLY.

It belongs to the cyclin family.

Functionally, essential for the control of the cell cycle at the G1/S (start) transition. Interacts with the CDC2 protein kinase to form MPF. The protein is G1/S-specific cyclin CCN1 (CCN1) of Candida albicans (strain WO-1) (Yeast).